Reading from the N-terminus, the 330-residue chain is Aspartate--ammonia ligase (330 aa).

This sequence belongs to the class-II aminoacyl-tRNA synthetase family. AsnA subfamily.

It localises to the cytoplasm. It carries out the reaction L-aspartate + NH4(+) + ATP = L-asparagine + AMP + diphosphate + H(+). Its pathway is amino-acid biosynthesis; L-asparagine biosynthesis; L-asparagine from L-aspartate (ammonia route): step 1/1. The sequence is that of Aspartate--ammonia ligase from Escherichia coli O127:H6 (strain E2348/69 / EPEC).